A 287-amino-acid chain; its full sequence is Acetyl-coenzyme A carboxylase carboxyl transferase subunit beta (287 aa).

The CoA carboxyltransferase N-terminal domain maps to 25–287; sequence IWTKCSGCVQ…KLTQQSFSEK (263 aa). The Zn(2+) site is built by cysteine 29, cysteine 32, cysteine 48, and cysteine 51. A C4-type zinc finger spans residues 29-51; the sequence is CSGCVQLLYTKELERNLQVCPKC.

The protein belongs to the AccD/PCCB family. In terms of assembly, acetyl-CoA carboxylase is a heterohexamer composed of biotin carboxyl carrier protein (AccB), biotin carboxylase (AccC) and two subunits each of ACCase subunit alpha (AccA) and ACCase subunit beta (AccD). Zn(2+) is required as a cofactor.

The protein localises to the cytoplasm. It carries out the reaction N(6)-carboxybiotinyl-L-lysyl-[protein] + acetyl-CoA = N(6)-biotinyl-L-lysyl-[protein] + malonyl-CoA. Its pathway is lipid metabolism; malonyl-CoA biosynthesis; malonyl-CoA from acetyl-CoA: step 1/1. In terms of biological role, component of the acetyl coenzyme A carboxylase (ACC) complex. Biotin carboxylase (BC) catalyzes the carboxylation of biotin on its carrier protein (BCCP) and then the CO(2) group is transferred by the transcarboxylase to acetyl-CoA to form malonyl-CoA. In Blochmanniella floridana, this protein is Acetyl-coenzyme A carboxylase carboxyl transferase subunit beta.